Reading from the N-terminus, the 215-residue chain is Protein C' (215 aa).

A disordered region spans residues 12–34 (MPSFLKKILKLRGRRQEDESRSR). Residues 15-22 (FLKKILKL) form an involved in self-degradation and in host STAT1 degradation region. Residues 25-35 (RRQEDESRSRM) show a composition bias toward basic and acidic residues. The span at 36–66 (LSDSSTQSYQVNQLTSEETEAGSTIPSTPSK) shows a compositional bias: polar residues.

Belongs to the respirovirus protein C family. In terms of assembly, the different isoforms interact (via C-terminus) with unphosphorylated and phosphorylated human STAT1 (via N-terminus), favoring the formation of parallel STAT1 homodimers. The different isoforms do not interact with host STAT2. C protein interacts with L protein; this interaction has an inhibitory effect on viral transcription and replication. Post-translationally, protein Y1 is produced not only by alternative initiation, but also by proteolytic cleavage of C'. Only alternative initiation is detected in vitro, whereas in vivo cleavage seems to be predominant.

It is found in the host cytoplasm. The different products prevent the establishment of cellular antiviral state by blocking the interferon-alpha/beta (IFN-alpha/beta) and IFN-gamma signaling pathways. They inhibit IFN-alpha/beta induced tyrosine phosphorylation of STAT1 and STAT2. Blocking the IFN-alpha/beta pathway requires binding to STAT1 in the cytoplasm. They inhibit IFN-gamma induced serine phosphorylation of STAT1. Block the IFN-gamma pathway by binding to and stabilizing the parallel form of the STAT1 dimer, further inducing high-molecular-weight complex formation and inhibition of transcription by IFN-gamma. May also have a role in preventing the cell to enter apoptosis. Modulate regulation of viral transcription and replication. Overexpression inhibits the viral RNA polymerase. The absence of all C', C and Y1 proteins leads to viral delayed growth. Plays an important role in virion particles release. Modulates virion shape. This is Protein C' (P/V/C) from Cavia cutleri (Guinea pig).